A 584-amino-acid chain; its full sequence is Endogenous retrovirus group FC1 Env polyprotein (584 aa).

The signal sequence occupies residues 1 to 22 (MARPSPLCLLLLLTLLTPIVPS). The Extracellular segment spans residues 23-518 (NSLLTEPPFR…GWWQSPLTTW (496 aa)). N-linked (GlcNAc...) asparagine glycans are attached at residues Asn69 and Asn247. A CXXC motif is present at residues 251 to 254 (CFLC). Residues Asn272, Asn276, Asn308, Asn313, Asn322, Asn334, Asn342, and Asn346 are each glycosylated (N-linked (GlcNAc...) asparagine). Residues 384–404 (AVFPPLVIGVSLTSSLVASGL) are fusion peptide. The short motif at 449 to 465 (MQNRRALDLLTADKGGT) is the CKS-17 element. A disulfide bridge links Cys466 with Cys473. The CX6CC signature appears at 466–474 (CMFLGEECC). The N-linked (GlcNAc...) asparagine glycan is linked to Asn478. A helical membrane pass occupies residues 519-539 (IIPFISPILIICLLLLIAPCV). Over 540–584 (LKFIKNRISEVSRVTVNQMLLHPYSRLPTSEDHYDDALTQQEAAR) the chain is Cytoplasmic.

It belongs to the gamma type-C retroviral envelope protein family. HERV class-I F(c)1 env subfamily. In terms of assembly, the surface (SU) and transmembrane (TM) proteins form a heterodimer. SU and TM are attached by noncovalent interactions or by a labile interchain disulfide bond. Specific enzymatic cleavages in vivo yield the mature SU and TM proteins. Post-translationally, the CXXC motif is highly conserved across a broad range of retroviral envelope proteins. It is thought to participate in the formation of a labile disulfide bond possibly with the CX6CC motif present in the transmembrane protein. Low expression in skin, testis and trachea.

The protein localises to the virion. Its subcellular location is the cell membrane. Retroviral envelope proteins mediate receptor recognition and membrane fusion during early infection. Endogenous envelope proteins may have kept, lost or modified their original function during evolution. This endogenous envelope protein has lost its original fusogenic properties. Its function is as follows. SU mediates receptor recognition. Functionally, TM anchors the envelope heterodimer to the viral membrane through one transmembrane domain. The other hydrophobic domain, called fusion peptide, mediates fusion of the viral membrane with the target cell membrane. In Homo sapiens (Human), this protein is Endogenous retrovirus group FC1 Env polyprotein (ERVFC1).